A 425-amino-acid chain; its full sequence is CDP-diacylglycerol--serine O-phosphatidyltransferase 1 (425 aa).

The segment covering 1 to 16 has biased composition (basic and acidic residues); it reads MEPNGYRKERRKEQHL. The disordered stretch occupies residues 1–23; the sequence is MEPNGYRKERRKEQHLGRMNGGG. 9 consecutive transmembrane segments (helical) span residues 42–62, 79–99, 105–125, 197–217, 227–247, 296–316, 321–341, 361–381, and 390–410; these read TISL…ALDP, WAMI…TVLI, IWRL…FLLF, PLLW…RHML, SIVL…MYTV, FIQV…TFFL, WIPP…LIAI, GAFC…CIKF, and MPLW…AFLL.

This sequence belongs to the CDP-alcohol phosphatidyltransferase class-I family. In terms of tissue distribution, expressed in trichomes, leaf veins and root vasculature.

The protein resides in the endoplasmic reticulum membrane. It is found in the nucleus envelope. It catalyses the reaction a CDP-1,2-diacyl-sn-glycerol + L-serine = a 1,2-diacyl-sn-glycero-3-phospho-L-serine + CMP + H(+). Its pathway is phospholipid metabolism; phosphatidylethanolamine biosynthesis; phosphatidylethanolamine from CDP-diacylglycerol: step 1/2. Catalyzes a base-exchange reaction in which the polar head group of phosphatidylethanolamine (PE) or phosphatidylcholine (PC) is replaced by L-serine. Is essential for phosphatidylserine (PS) biosynthesis and PE seems to be the most plausible substrate. Plays an important role in microspore maturation. The protein is CDP-diacylglycerol--serine O-phosphatidyltransferase 1 (PSS1) of Arabidopsis thaliana (Mouse-ear cress).